We begin with the raw amino-acid sequence, 180 residues long: Pro-glucagon (180 aa).

The first 20 residues, 1-20 (MKSVYFVAGLFIMLAQGSWQ), serve as a signal peptide directing secretion. Residues 23–58 (LQDTEEKPRSVSASQTDMLDDPDQMNEDKRHSQGTF) form a disordered region. Ser54 carries the post-translational modification Phosphoserine. A propeptide spanning residues 84 to 89 (NRNNIA) is cleaved from the precursor. 2 positions are modified to phosphoserine: Ser105 and Ser108. The residue at position 127 (Arg127) is an Arginine amide. Positions 131 to 145 (DFPEEVAIVEELGRR) are excised as a propeptide. Ser150 and Ser152 each carry phosphoserine.

Belongs to the glucagon family. In terms of processing, proglucagon is post-translationally processed in a tissue-specific manner in pancreatic A cells and intestinal L cells. In pancreatic A cells, the major bioactive hormone is glucagon cleaved by PCSK2/PC2. In the intestinal L cells PCSK1/PC1 liberates GLP-1, GLP-2, glicentin and oxyntomodulin. GLP-1 is further N-terminally truncated by post-translational processing in the intestinal L cells resulting in GLP-1(7-37) GLP-1-(7-36)amide. The C-terminal amidation is neither important for the metabolism of GLP-1 nor for its effects on the endocrine pancreas.

The protein localises to the secreted. Functionally, plays a key role in glucose metabolism and homeostasis. Regulates blood glucose by increasing gluconeogenesis and decreasing glycolysis. A counterregulatory hormone of insulin, raises plasma glucose levels in response to insulin-induced hypoglycemia. Plays an important role in initiating and maintaining hyperglycemic conditions in diabetes. In terms of biological role, potent stimulator of glucose-dependent insulin release. Also stimulates insulin release in response to IL6. Plays important roles on gastric motility and the suppression of plasma glucagon levels. May be involved in the suppression of satiety and stimulation of glucose disposal in peripheral tissues, independent of the actions of insulin. Has growth-promoting activities on intestinal epithelium. May also regulate the hypothalamic pituitary axis (HPA) via effects on LH, TSH, CRH, oxytocin, and vasopressin secretion. Increases islet mass through stimulation of islet neogenesis and pancreatic beta cell proliferation. Inhibits beta cell apoptosis. Its function is as follows. Stimulates intestinal growth and up-regulates villus height in the small intestine, concomitant with increased crypt cell proliferation and decreased enterocyte apoptosis. The gastrointestinal tract, from the stomach to the colon is the principal target for GLP-2 action. Plays a key role in nutrient homeostasis, enhancing nutrient assimilation through enhanced gastrointestinal function, as well as increasing nutrient disposal. Stimulates intestinal glucose transport and decreases mucosal permeability. Significantly reduces food intake. Inhibits gastric emptying in humans. Suppression of gastric emptying may lead to increased gastric distension, which may contribute to satiety by causing a sensation of fullness. Functionally, may modulate gastric acid secretion and the gastro-pyloro-duodenal activity. May play an important role in intestinal mucosal growth in the early period of life. The protein is Pro-glucagon (GCG) of Cavia porcellus (Guinea pig).